The primary structure comprises 208 residues: MEGIIVRRVIPSDNSCLFNAIGYVMDKDKNKAPELRQVIAAAVASNKEKYNEAFLGKLNEEYCAWILNPDKWGGAIELSILADYYGREIAAYDIQTSRCDLYGQTRNYDERVMLIYDGLHYDALALSPFEGAEEDFDMTIYPVGKDRSIGSIEGLALNLVKDQQRKRSYTDTANFTLRCGVCQIGVIGQKEAVEHAQATGHVNFQEYK.

The OTU domain maps to 5 to 127 (IVRRVIPSDN…GLHYDALALS (123 aa)). Residue aspartate 13 is part of the active site. Residue cysteine 16 is the Nucleophile of the active site. Residues histidine 120 and histidine 201 contribute to the active site.

The protein belongs to the peptidase C85 family.

It carries out the reaction Thiol-dependent hydrolysis of ester, thioester, amide, peptide and isopeptide bonds formed by the C-terminal Gly of ubiquitin (a 76-residue protein attached to proteins as an intracellular targeting signal).. Its function is as follows. Hydrolase that can remove conjugated ubiquitin from proteins in vitro and may therefore play an important regulatory role at the level of protein turnover by preventing degradation. Cysteine protease with a preference for 'Lys-63' and 'Lys-48' -linked ubiquitin (UB) tetramers as substrates. The chain is OVARIAN TUMOR DOMAIN-containing deubiquitinating enzyme 2 from Arabidopsis thaliana (Mouse-ear cress).